We begin with the raw amino-acid sequence, 299 residues long: Small ribosomal subunit protein uS2 (299 aa).

Over residues 259-291 (AAASAAGPTSWEADGADWAASSAPAAAGESWAE) the composition is skewed to low complexity. The tract at residues 259 to 299 (AAASAAGPTSWEADGADWAASSAPAAAGESWAETQPAEGKW) is disordered.

Belongs to the universal ribosomal protein uS2 family. As to quaternary structure, component of the small ribosomal subunit. Mature ribosomes consist of a small (40S) and a large (60S) subunit. The 40S subunit contains about 33 different proteins and 1 molecule of RNA (18S). The 60S subunit contains about 49 different proteins and 3 molecules of RNA (25S, 5.8S and 5S). Interacts with rps21.

It is found in the cytoplasm. Required for the assembly and/or stability of the 40S ribosomal subunit. Required for the processing of the 20S rRNA-precursor to mature 18S rRNA in a late step of the maturation of 40S ribosomal subunits. This is Small ribosomal subunit protein uS2 (rps0) from Aspergillus flavus (strain ATCC 200026 / FGSC A1120 / IAM 13836 / NRRL 3357 / JCM 12722 / SRRC 167).